Consider the following 204-residue polypeptide: Holliday junction branch migration complex subunit RuvA (204 aa).

A domain I region spans residues 1–64 (MIGRLCGTAE…EDAITLFGFI (64 aa)). Residues 65–143 (DAAERDWFRL…AMPTGSAFIP (79 aa)) are domain II. Residues 144–154 (TGTAPPVAPPQ) are flexible linker. Residues 154–204 (QGKLADALSALVNLGYRRAEAEAALSAVQAEAGEDAALDELIRGGLRRLAR) are domain III.

It belongs to the RuvA family. As to quaternary structure, homotetramer. Forms an RuvA(8)-RuvB(12)-Holliday junction (HJ) complex. HJ DNA is sandwiched between 2 RuvA tetramers; dsDNA enters through RuvA and exits via RuvB. An RuvB hexamer assembles on each DNA strand where it exits the tetramer. Each RuvB hexamer is contacted by two RuvA subunits (via domain III) on 2 adjacent RuvB subunits; this complex drives branch migration. In the full resolvosome a probable DNA-RuvA(4)-RuvB(12)-RuvC(2) complex forms which resolves the HJ.

Its subcellular location is the cytoplasm. Its function is as follows. The RuvA-RuvB-RuvC complex processes Holliday junction (HJ) DNA during genetic recombination and DNA repair, while the RuvA-RuvB complex plays an important role in the rescue of blocked DNA replication forks via replication fork reversal (RFR). RuvA specifically binds to HJ cruciform DNA, conferring on it an open structure. The RuvB hexamer acts as an ATP-dependent pump, pulling dsDNA into and through the RuvAB complex. HJ branch migration allows RuvC to scan DNA until it finds its consensus sequence, where it cleaves and resolves the cruciform DNA. In Acidiphilium cryptum (strain JF-5), this protein is Holliday junction branch migration complex subunit RuvA.